The sequence spans 362 residues: Phospho-N-acetylmuramoyl-pentapeptide-transferase (362 aa).

10 helical membrane-spanning segments follow: residues 21–41 (YITF…FLLG), 75–95 (TMGG…WADL), 100–120 (VWAV…DDFL), 136–156 (LVVQ…LMPG), 170–190 (LMIP…MGAS), 201–221 (GLAI…AYLV), 225–245 (IFSH…AVFC), 247–267 (ALIG…AVFM), 290–310 (IVLA…IVQV), and 339–359 (TVVI…LATL).

Belongs to the glycosyltransferase 4 family. MraY subfamily. The cofactor is Mg(2+).

It localises to the cell inner membrane. It catalyses the reaction UDP-N-acetyl-alpha-D-muramoyl-L-alanyl-gamma-D-glutamyl-meso-2,6-diaminopimeloyl-D-alanyl-D-alanine + di-trans,octa-cis-undecaprenyl phosphate = di-trans,octa-cis-undecaprenyl diphospho-N-acetyl-alpha-D-muramoyl-L-alanyl-D-glutamyl-meso-2,6-diaminopimeloyl-D-alanyl-D-alanine + UMP. The protein operates within cell wall biogenesis; peptidoglycan biosynthesis. In terms of biological role, catalyzes the initial step of the lipid cycle reactions in the biosynthesis of the cell wall peptidoglycan: transfers peptidoglycan precursor phospho-MurNAc-pentapeptide from UDP-MurNAc-pentapeptide onto the lipid carrier undecaprenyl phosphate, yielding undecaprenyl-pyrophosphoryl-MurNAc-pentapeptide, known as lipid I. This chain is Phospho-N-acetylmuramoyl-pentapeptide-transferase, found in Acidiphilium cryptum (strain JF-5).